The chain runs to 298 residues: Junctional adhesion molecule B (298 aa).

A signal peptide spans 1-28 (MARSPQGLLMLLLLHYLIVALDYHKANG). Residues 29 to 236 (FSASKDHRQE…GKRMQVDVLN (208 aa)) are Extracellular-facing. The Ig-like V-type domain maps to 32-128 (SKDHRQEVTV…GQNLQEDKVM (97 aa)). 2 disulfide bridges follow: C51/C110 and C156/C214. An N-linked (GlcNAc...) asparagine glycan is attached at N99. The Ig-like C2-type domain maps to 135–238 (PAVPACEVPT…RMQVDVLNIS (104 aa)). The chain crosses the membrane as a helical span at residues 237 to 257 (ISGIIATVVVVAFVISVCGLG). At 258–298 (TCYAQRKGYFSKETSFQKGSPASKVTTMSENDFKHTKSFII) the chain is on the cytoplasmic side.

Belongs to the immunoglobulin superfamily. The expression in Sertoli cells is regulated by TGFB3 through ubiquitin-mediated proteasomal degradation. In terms of tissue distribution, expressed by bone marrow stromal cells (at protein level). Expressed in skin (at protein level). Expressed in testis by Sertoli cells (at protein level). Expressed by dorsal root ganglion and spinal cord neurons.

It is found in the cell membrane. Its subcellular location is the cell junction. The protein localises to the tight junction. Functionally, junctional adhesion protein that mediates heterotypic cell-cell interactions with its cognate receptor JAM3 to regulate different cellular processes. Plays a role in homing and mobilization of hematopoietic stem and progenitor cells within the bone marrow. At the surface of bone marrow stromal cells, it contributes to the retention of the hematopoietic stem and progenitor cells expressing JAM3. Plays a central role in leukocytes extravasation by facilitating not only transmigration but also tethering and rolling of leukocytes along the endothelium. Tethering and rolling of leukocytes are dependent on the binding by JAM2 of the integrin alpha-4/beta-1. Plays a role in spermatogenesis where JAM2 and JAM3, which are respectively expressed by Sertoli and germ cells, mediate an interaction between both cell types and play an essential role in the anchorage of germ cells onto Sertoli cells and the assembly of cell polarity complexes during spermatid differentiation. Also functions as an inhibitory somatodendritic cue that prevents the myelination of non-axonal parts of neurons. During myogenesis, it is involved in myocyte fusion. May also play a role in angiogenesis. The chain is Junctional adhesion molecule B from Mus musculus (Mouse).